We begin with the raw amino-acid sequence, 88 residues long: Three-finger toxin 3FTx-2 (88 aa).

Positions 1–21 are cleaved as a signal peptide; the sequence is MKTLLLTLVVVTIVCLDLGNT. Cystine bridges form between Cys27/Cys48, Cys41/Cys66, Cys70/Cys81, and Cys82/Cys87.

It belongs to the three-finger toxin family. Ancestral subfamily. Orphan group II sub-subfamily. In terms of tissue distribution, expressed by the venom gland.

Its subcellular location is the secreted. Functionally, binds with low affinity to muscular (alpha-1-beta-1-delta-epsilon/CHRNA1-CHRNB1-CHRND-CHRNE) and very low affinity to neuronal (alpha-7/CHRNA7) nicotinic acetylcholine receptor (nAChR). This is Three-finger toxin 3FTx-2 from Micrurus corallinus (Brazilian coral snake).